The chain runs to 229 residues: Peptidase E (229 aa).

Residues S120, D135, and H157 each act as charge relay system in the active site.

The protein belongs to the peptidase S51 family.

The protein resides in the cytoplasm. It catalyses the reaction Dipeptidase E catalyzes the hydrolysis of dipeptides Asp-|-Xaa. It does not act on peptides with N-terminal Glu, Asn or Gln, nor does it cleave isoaspartyl peptides.. Hydrolyzes dipeptides containing N-terminal aspartate residues. May play a role in allowing the cell to use peptide aspartate to spare carbon otherwise required for the synthesis of the aspartate family of amino acids. The protein is Peptidase E of Escherichia coli O6:K15:H31 (strain 536 / UPEC).